Here is a 339-residue protein sequence, read N- to C-terminus: MDTIILGIESSCDDTSAAVIKNGVLLSNVVSSQAVHEAYGGVVPELASRAHQQNIVPVVHEALKRAGVTKEQLSAVAFTRGPGLMGSLLVGVSFAKGFARSLNIPMIDVNHLQAHVLAHFIKESEEDNNQPKFPFLCLLVSGGNSQIILVKAYNDMEVLGQTIDDAAGEAIDKCSKVMGLGYPGGPIIDKLARQGNPKAFTFSKPHIPDYNYSFSGLKTSFLYSLRDWLKEDPDFIEHHKNDLAASLEATIVDILMDKLRKAAKNLKINEVAVAGGVSANNGLRNSFREHAGKYGWNIYIPKFSFTTDNAAMIAITGYYKYLDNDFCTIDKPAYSRVTI.

His111 and His115 together coordinate Fe cation. Substrate-binding positions include 139-143, Asp172, Gly185, Asp189, and Asn280; that span reads LVSGG. Asp308 contacts Fe cation.

This sequence belongs to the KAE1 / TsaD family. Requires Fe(2+) as cofactor.

The protein localises to the cytoplasm. The enzyme catalyses L-threonylcarbamoyladenylate + adenosine(37) in tRNA = N(6)-L-threonylcarbamoyladenosine(37) in tRNA + AMP + H(+). Its function is as follows. Required for the formation of a threonylcarbamoyl group on adenosine at position 37 (t(6)A37) in tRNAs that read codons beginning with adenine. Is involved in the transfer of the threonylcarbamoyl moiety of threonylcarbamoyl-AMP (TC-AMP) to the N6 group of A37, together with TsaE and TsaB. TsaD likely plays a direct catalytic role in this reaction. This Phocaeicola vulgatus (strain ATCC 8482 / DSM 1447 / JCM 5826 / CCUG 4940 / NBRC 14291 / NCTC 11154) (Bacteroides vulgatus) protein is tRNA N6-adenosine threonylcarbamoyltransferase.